Reading from the N-terminus, the 198-residue chain is MFAVLKTGGKQYKVQAGDMLRVEKLAADAGETVQFNDVLMIGGDAPVVGAPFVSGAAVQAEVVEQIKGDKVIKFVKRRRKHSSKRTVGHRQKLTLVKITEILASGADASGVKAATGKGEAAPAAKAAPKAKAAAPAAAGSDDLTQLTGVGPAAAKKLEAAGLTTFAQIAALSEDDIAGIDAIKIKPEWVEQAKELAQG.

This sequence belongs to the bacterial ribosomal protein bL21 family. As to quaternary structure, part of the 50S ribosomal subunit. Contacts protein L20.

Its function is as follows. This protein binds to 23S rRNA in the presence of protein L20. This chain is Large ribosomal subunit protein bL21, found in Ruegeria sp. (strain TM1040) (Silicibacter sp.).